The chain runs to 97 residues: Aspartyl/glutamyl-tRNA(Asn/Gln) amidotransferase subunit C (97 aa).

The protein belongs to the GatC family. As to quaternary structure, heterotrimer of A, B and C subunits.

It catalyses the reaction L-glutamyl-tRNA(Gln) + L-glutamine + ATP + H2O = L-glutaminyl-tRNA(Gln) + L-glutamate + ADP + phosphate + H(+). The enzyme catalyses L-aspartyl-tRNA(Asn) + L-glutamine + ATP + H2O = L-asparaginyl-tRNA(Asn) + L-glutamate + ADP + phosphate + 2 H(+). Its function is as follows. Allows the formation of correctly charged Asn-tRNA(Asn) or Gln-tRNA(Gln) through the transamidation of misacylated Asp-tRNA(Asn) or Glu-tRNA(Gln) in organisms which lack either or both of asparaginyl-tRNA or glutaminyl-tRNA synthetases. The reaction takes place in the presence of glutamine and ATP through an activated phospho-Asp-tRNA(Asn) or phospho-Glu-tRNA(Gln). This Prochlorococcus marinus (strain MIT 9303) protein is Aspartyl/glutamyl-tRNA(Asn/Gln) amidotransferase subunit C.